The following is a 164-amino-acid chain: Large ribosomal subunit protein uL23 (164 aa).

The disordered stretch occupies residues 1 to 41 (MPAKAASAAASKKNSAPKSAVSKKVAKKGAPAAAAKPTKVV).

Belongs to the universal ribosomal protein uL23 family.

In terms of biological role, this protein binds to a specific region on the 26S rRNA. The protein is Large ribosomal subunit protein uL23 (RPL23A) of Trypanosoma brucei brucei.